Reading from the N-terminus, the 142-residue chain is Midkine-A (142 aa).

Positions 1 to 20 (MELRAFCVILLITVLAVSSQ) are cleaved as a signal peptide. Disulfide bonds link cysteine 36-cysteine 60, cysteine 44-cysteine 69, cysteine 51-cysteine 73, cysteine 83-cysteine 115, and cysteine 93-cysteine 125.

This sequence belongs to the pleiotrophin family. Expression at the mid-gastrula stage begins in the neural anlage, and becomes increasingly prominent in the central nervous system and head mesenchyme during neurula stages. Although the mRNA is localized to the developing central nervous system (CNS), the protein is deposited at the neuromuscular junction (NMJ). In the tailbud stage embryo, expressed in the head and tail regions as well as in the CNS. In adults, expression is highest in the brain, eye and bone, with lower expression in the heart and lung. Not expressed in the ovary.

It localises to the secreted. Functionally, secreted protein that functions as a cytokine and growth factor and mediates its signal through cell-surface proteoglycan and non-proteoglycan receptors. Binds cell-surface proteoglycan receptors via their chondroitin sulfate (CS) groups. Thereby regulates many processes like inflammatory response, cell proliferation, cell adhesion, cell growth, cell survival, tissue regeneration, cell differentiation and cell migration. Inhibits mesoderm formation and promotes neural formation during development. Plays a role in development of the neuromuscular junction (NMJ). Has antibacterial activity against both Gram-positive and Gram-negative bacteria. The polypeptide is Midkine-A (mdk-a) (Xenopus laevis (African clawed frog)).